Reading from the N-terminus, the 229-residue chain is UPF0173 metal-dependent hydrolase SH1218 (229 aa).

This sequence belongs to the UPF0173 family.

This chain is UPF0173 metal-dependent hydrolase SH1218, found in Staphylococcus haemolyticus (strain JCSC1435).